Here is a 188-residue protein sequence, read N- to C-terminus: Kininogen (188 aa).

Asn36, Asn150, and Asn182 each carry an N-linked (GlcNAc...) asparagine glycan.

Post-translationally, bradykinin is released from kininogen by kallikrein. N-glycosylated. Contains O-acetylated sialic acids as terminal elements on biantennary and triantennary N-glycans.

In terms of biological role, inhibits papain and ficin (cysteine proteinases) but not trypsin (a serine proteinase). This chain is Kininogen, found in Anarhichas minor (Arctic spotted wolffish).